We begin with the raw amino-acid sequence, 77 residues long: MKTSVLLVILGIAAITVQCTASESVEQDSLRTFVDTVLGWNAEMASEARCGGWMAKCADSDDCCETFHCTRFNVCGK.

The signal sequence occupies residues 1–21 (MKTSVLLVILGIAAITVQCTA). The propeptide occupies 22–49 (SESVEQDSLRTFVDTVLGWNAEMASEAR). Intrachain disulfides connect C50–C64, C57–C69, and C63–C75. K77 is modified (lysine amide).

It belongs to the neurotoxin 10 (Hwtx-1) family. 65 (Jztx-21) subfamily. As to expression, expressed by the venom gland.

It is found in the secreted. Functionally, probable ion channel inhibitor. This Chilobrachys guangxiensis (Chinese earth tiger tarantula) protein is U14-theraphotoxin-Cg1a 3.